The sequence spans 285 residues: Pantothenate synthetase (285 aa).

Residue M30 to H37 coordinates ATP. H37 functions as the Proton donor in the catalytic mechanism. (R)-pantoate is bound at residue Q61. Q61 is a beta-alanine binding site. G147 to D150 serves as a coordination point for ATP. Q153 serves as a coordination point for (R)-pantoate. Residues V176 and K184–R187 contribute to the ATP site.

The protein belongs to the pantothenate synthetase family. Homodimer.

It is found in the cytoplasm. The catalysed reaction is (R)-pantoate + beta-alanine + ATP = (R)-pantothenate + AMP + diphosphate + H(+). It participates in cofactor biosynthesis; (R)-pantothenate biosynthesis; (R)-pantothenate from (R)-pantoate and beta-alanine: step 1/1. Its function is as follows. Catalyzes the condensation of pantoate with beta-alanine in an ATP-dependent reaction via a pantoyl-adenylate intermediate. In Listeria monocytogenes serotype 4b (strain F2365), this protein is Pantothenate synthetase.